Here is a 532-residue protein sequence, read N- to C-terminus: MAEAPIAPVVLVILDGWGYRPDTRANAIAQANTPIMDSLIAAYPNTLVNTSGKDVGLPKGQMGNSEVGHLNLGAGRVVPQELVRISDAIEDGTFFDNQALIEVCQRVRDRRGKLHLIGLCSDGGVHSHIDHLLGLIDLAKLQGISQLCIHAITDGRDTPTNEGAHFVQQIQAHLEKIGLGRIVSVSGRYYALDRDRRWDRVEKAYRVMTEDGVGDGRSAAQVIKDYYASDITDEFIPPTRIGAGAIASGDGVIFYNFRPDRARQLCYALVNPSFDGFPRERIQPLDFVTFTQYDPALPVVVAFEPQNLNNILGEIISRQGMKQFRTAETEKYPHVTYFFNGGLEQPFAGEDRELIQSPMVSTYDKAPQMSAKAVTDAVCRAMEKGIYSLVVVNYANPDMVGHTGKLKEAIQAIETVDLNLGRLLASAAKVGGTVLITADHGNAEYMSDESGNPWTAHTTNPVPFILVEGEGRKIPGHGGEVKLREGGKLADIAPTILDILQLPVPAEMTGKTLIDQPLVEIKANRTPVNLSR.

Residues D15 and S65 each contribute to the Mn(2+) site. Residue S65 is the Phosphoserine intermediate of the active site. Substrate-binding positions include H126, 156–157 (RD), R188, R194, 258–261 (RPDR), and K331. Mn(2+)-binding residues include D398, H402, D439, H440, and H457.

This sequence belongs to the BPG-independent phosphoglycerate mutase family. Monomer. Requires Mn(2+) as cofactor.

It carries out the reaction (2R)-2-phosphoglycerate = (2R)-3-phosphoglycerate. Its pathway is carbohydrate degradation; glycolysis; pyruvate from D-glyceraldehyde 3-phosphate: step 3/5. In terms of biological role, catalyzes the interconversion of 2-phosphoglycerate and 3-phosphoglycerate. This is 2,3-bisphosphoglycerate-independent phosphoglycerate mutase from Synechocystis sp. (strain ATCC 27184 / PCC 6803 / Kazusa).